The chain runs to 202 residues: Probable GTP-binding protein EngB (202 aa).

An EngB-type G domain is found at 26–200 (VSKEIAFTGS…KAQLDSWFSI (175 aa)). Residues 34–41 (GSSNVGKS), 61–65 (GSTKT), 79–82 (DLPG), 146–149 (NKAD), and 179–181 (FSS) each bind GTP. The Mg(2+) site is built by S41 and T63.

It belongs to the TRAFAC class TrmE-Era-EngA-EngB-Septin-like GTPase superfamily. EngB GTPase family. Mg(2+) serves as cofactor.

In terms of biological role, necessary for normal cell division and for the maintenance of normal septation. The chain is Probable GTP-binding protein EngB from Baumannia cicadellinicola subsp. Homalodisca coagulata.